Here is a 924-residue protein sequence, read N- to C-terminus: Lipoxygenase 7, chloroplastic (924 aa).

The N-terminal 61 residues, 1 to 61 (MLRPQLNPSS…GQGSSRVVVV (61 aa)), are a transit peptide targeting the chloroplast. Residues 88 to 218 (AVATIKVTVG…VGDEGTPSKR (131 aa)) form the PLAT domain. Positions 225-924 (TYLPGQTPAG…GMGIPNSTSI (700 aa)) constitute a Lipoxygenase domain. Positions 231 to 315 (TPAGLRSYRK…PKSETRKGNV (85 aa)) are disordered. 2 stretches are compositionally biased toward basic and acidic residues: residues 239–262 (RKND…RVYD) and 302–315 (SKKD…KGNV). Fe cation is bound by residues His581, His586, His773, Asn777, and Ile924.

This sequence belongs to the lipoxygenase family. Requires Fe cation as cofactor.

The protein localises to the plastid. It localises to the chloroplast. The catalysed reaction is (9Z,12Z)-octadecadienoate + O2 = (13S)-hydroperoxy-(9Z,11E)-octadecadienoate. It carries out the reaction (9Z,12Z,15Z)-octadecatrienoate + O2 = (13S)-hydroperoxy-(9Z,11E,15Z)-octadecatrienoate. It participates in lipid metabolism; oxylipin biosynthesis. Functionally, plant lipoxygenase may be involved in a number of diverse aspects of plant physiology including growth and development, pest resistance, and senescence or responses to wounding. This lipoxygenase introduces molecular oxygen exclusively into the C-13 position of linoleic and linolenic acids. This is Lipoxygenase 7, chloroplastic (CM-LOX1) from Oryza sativa subsp. japonica (Rice).